The chain runs to 305 residues: Undecaprenyl-diphosphatase (305 aa).

The next 8 helical transmembrane spans lie at 18-38, 55-75, 103-123, 130-150, 187-207, 225-245, 246-266, and 284-304; these read GVTE…PALV, YLAF…VFFW, WLIV…EQLF, PVPA…GEVL, GVLI…RSGI, FSFL…IPEL, FGPL…ASFV, and LTPF…WLAL.

It belongs to the UppP family.

It localises to the cell membrane. The enzyme catalyses di-trans,octa-cis-undecaprenyl diphosphate + H2O = di-trans,octa-cis-undecaprenyl phosphate + phosphate + H(+). In terms of biological role, catalyzes the dephosphorylation of undecaprenyl diphosphate (UPP). Confers resistance to bacitracin. In Mycobacterium avium (strain 104), this protein is Undecaprenyl-diphosphatase.